A 270-amino-acid polypeptide reads, in one-letter code: Fructose-2,6-bisphosphatase TIGAR (270 aa).

The active-site Tele-phosphohistidine intermediate is histidine 11. Lysine 50 bears the N6-acetyllysine mark. Residue glutamate 89 is the Proton donor/acceptor of the active site.

It belongs to the phosphoglycerate mutase family. Interacts with HK2; the interaction increases hexokinase HK2 activity in a hypoxia- and HIF1A-dependent manner, resulting in the regulation of mitochondrial membrane potential, thus increasing NADPH production and decreasing intracellular ROS levels.

The protein resides in the cytoplasm. It localises to the nucleus. The protein localises to the mitochondrion. The catalysed reaction is beta-D-fructose 2,6-bisphosphate + H2O = beta-D-fructose 6-phosphate + phosphate. Its function is as follows. Fructose-bisphosphatase hydrolyzing fructose-2,6-bisphosphate as well as fructose-1,6-bisphosphate. Acts as a negative regulator of glycolysis by lowering intracellular levels of fructose-2,6-bisphosphate in a p53/TP53-dependent manner, resulting in the pentose phosphate pathway (PPP) activation and NADPH production. Contributes to the generation of reduced glutathione to cause a decrease in intracellular reactive oxygen species (ROS) content, correlating with its ability to protect cells from oxidative or metabolic stress-induced cell death. Plays a role in promoting protection against cell death during hypoxia by decreasing mitochondria ROS levels in a HK2-dependent manner through a mechanism that is independent of its fructose-bisphosphatase activity. In response to cardiac damage stress, mediates p53-induced inhibition of myocyte mitophagy through ROS levels reduction and the subsequent inactivation of BNIP3. Reduced mitophagy results in an enhanced apoptotic myocyte cell death, and exacerbates cardiac damage. Plays a role in adult intestinal regeneration; contributes to the growth, proliferation and survival of intestinal crypts following tissue ablation. Plays a neuroprotective role against ischemic brain damage by enhancing PPP flux and preserving mitochondria functions. Protects glioma cells from hypoxia- and ROS-induced cell death by inhibiting glycolysis and activating mitochondrial energy metabolism and oxygen consumption in a TKTL1-dependent and p53/TP53-independent manner. Plays a role in cancer cell survival by promoting DNA repair through activating PPP flux in a CDK5-ATM-dependent signaling pathway during hypoxia and/or genome stress-induced DNA damage responses. Involved in intestinal tumor progression. This is Fructose-2,6-bisphosphatase TIGAR from Bos taurus (Bovine).